A 396-amino-acid chain; its full sequence is Proton-coupled antiporter flippase LtaA (396 aa).

The next 12 helical transmembrane spans lie at 15–34 (FILM…MYIL), 46–73 (IAVA…GFLL), 80–99 (IVLT…VIWF), 105–126 (VIIF…IMLS), 138–159 (GYVY…NLLI), 165–184 (RFAF…YYFV), 211–231 (LLLF…VPIL), 243–264 (TIEY…MLFL), 276–298 (MYGV…SMIV), 304–326 (WIIA…TFMA), 338–358 (WGVF…FGGL), and 370–390 (FYFS…YFIA).

The protein belongs to the major facilitator superfamily. LtaA family.

It localises to the cell membrane. It participates in cell wall biogenesis; lipoteichoic acid biosynthesis. Functionally, proton-coupled antiporter flippase that catalyzes the translocation, from the inner to the outer leaflet of the cell membrane, of the lipid-linked disaccharide (anchor-LLD) that anchors lipoteichoic acids (LTA) to the cell membrane. This chain is Proton-coupled antiporter flippase LtaA (ltaA), found in Staphylococcus aureus (strain MRSA252).